A 351-amino-acid polypeptide reads, in one-letter code: LETM1 domain-containing protein 1 (351 aa).

Over 1 to 130 the chain is Cytoplasmic; it reads MLSGMALCRT…FRRDIIKAAP (130 aa). Residues 131–151 traverse the membrane as a helical segment; that stretch reads VVIISIPPFANYLVFVLMYFF. Over 152-351 the chain is Mitochondrial intermembrane; it reads PRQLLIRHFW…SANYLQSIKQ (200 aa). In terms of domain architecture, Letm1 RBD spans 172 to 351; sequence IYHRMRVEAY…SANYLQSIKQ (180 aa).

It localises to the mitochondrion outer membrane. The protein localises to the nucleus. The protein resides in the mitochondrion inner membrane. In terms of biological role, may play an essential role for mitochondrial structure and function. The polypeptide is LETM1 domain-containing protein 1 (Xenopus tropicalis (Western clawed frog)).